Consider the following 201-residue polypeptide: MKAKLTVSDSKKLFHEEFPYVIPGLYKRIVDEILVELNLLNHQNEFKQDYLFCIGLTETFKELTKGYKPEKHLDLLFESLCISTNFEAKEIKEISKISQKEFSDKSSKDILKLLKEKSNSKLYPSRILNLGIYILISNSQDFKENNDIEKNKMISDIFEKLSLSRNKAEKDIGIYKSSISKMEQAKELIQEQRIKDKKKTL.

The stretch at 174-201 forms a coiled coil; it reads IYKSSISKMEQAKELIQEQRIKDKKKTL.

It belongs to the THF1 family.

Functionally, may be involved in photosynthetic membrane biogenesis. In Prochlorococcus marinus (strain MIT 9312), this protein is Protein Thf1.